The sequence spans 524 residues: Beta-glucosidase 21 (524 aa).

The first 24 residues, 1–24, serve as a signal peptide directing secretion; it reads MALQKFPLMGLLLLLTILVSVTTA. Q55 contributes to the a beta-D-glucoside binding site. N-linked (GlcNAc...) asparagine glycosylation occurs at N61. A beta-D-glucoside contacts are provided by residues H158 and 203 to 204; that span reads NE. E204 serves as the catalytic Proton donor. C223 and C230 are oxidised to a cystine. Residues Y346, E418, W468, 475 to 476, and F484 contribute to the a beta-D-glucoside site; that span reads EW. The Nucleophile role is filled by E418. N494 carries an N-linked (GlcNAc...) asparagine glycan. Positions 521–524 match the Prevents secretion from ER motif; that stretch reads RDEL.

This sequence belongs to the glycosyl hydrolase 1 family. In terms of assembly, component of the PYK10 complex, at least composed of PYK10/BGLU23, BGLU21, BGLU22, JAL22, JAL23, PBP1/JAL30, PBP2/JAL31, JAL32, JAL33, JAL34, JAL35, GLL22 and GLL23. Expressed exclusively in roots.

It localises to the endoplasmic reticulum lumen. It catalyses the reaction Hydrolysis of terminal, non-reducing beta-D-glucosyl residues with release of beta-D-glucose.. Activated upon binding to PBP1 or PBP2. Functionally, beta-D-glucosidase active on scopolin &gt;&gt; esculin &gt;&gt; 4-MU-glucoside &gt; DIMBOA-glucoside. No activity with pNP-glucoside, oNP-glucoside and sinigrin as substrates. The polypeptide is Beta-glucosidase 21 (Arabidopsis thaliana (Mouse-ear cress)).